The primary structure comprises 144 residues: Deoxyuridine 5'-triphosphate nucleotidohydrolase (144 aa).

4 residues coordinate dUMP: Ser66, Arg133, Phe138, and Gly139.

This sequence belongs to the dUTPase family. Homotrimer. The cofactor is Mg(2+).

It carries out the reaction dUTP + H2O = dUMP + diphosphate + H(+). The protein operates within pyrimidine metabolism; dUMP biosynthesis; dUMP from dCTP (dUTP route): step 2/2. In terms of biological role, involved in nucleotide metabolism via production of dUMP, the immediate precursor of thymidine nucleotides, and decreases the intracellular concentration of dUTP so that uracil cannot be incorporated into DNA. The protein is Deoxyuridine 5'-triphosphate nucleotidohydrolase (DUT1) of Encephalitozoon cuniculi (strain GB-M1) (Microsporidian parasite).